The sequence spans 116 residues: Protein aq_1857 (116 aa).

This sequence belongs to the HesB/IscA family.

The sequence is that of Protein aq_1857 from Aquifex aeolicus (strain VF5).